The sequence spans 120 residues: Ribonuclease P protein component 2 (120 aa).

The protein belongs to the eukaryotic/archaeal RNase P protein component 2 family. Consists of a catalytic RNA component and at least 4-5 protein subunits. Forms a subcomplex with Rnp3 which stimulates the catalytic RNA.

Its subcellular location is the cytoplasm. The catalysed reaction is Endonucleolytic cleavage of RNA, removing 5'-extranucleotides from tRNA precursor.. In terms of biological role, part of ribonuclease P, a protein complex that generates mature tRNA molecules by cleaving their 5'-ends. The RNA is catalytic, but its KM for pre-tRNA is 170-fold decreased in the presence of the 4 known protein subunits (Rnp1-4). The protein subunits also decrease the amount of Mg(2+) needed for activity. This Pyrococcus furiosus (strain ATCC 43587 / DSM 3638 / JCM 8422 / Vc1) protein is Ribonuclease P protein component 2.